Here is a 104-residue protein sequence, read N- to C-terminus: MAAKIKRDDEVVVLAGKDKGKQGKVLKVLTDKDRVIVEGVNVVKKHQKPNPALGESGGIVEQEAAIHISNVAILNPETGKADRVGFRLEDGKKVRFFKSNNAII.

Belongs to the universal ribosomal protein uL24 family. As to quaternary structure, part of the 50S ribosomal subunit.

One of two assembly initiator proteins, it binds directly to the 5'-end of the 23S rRNA, where it nucleates assembly of the 50S subunit. Functionally, one of the proteins that surrounds the polypeptide exit tunnel on the outside of the subunit. This is Large ribosomal subunit protein uL24 from Idiomarina loihiensis (strain ATCC BAA-735 / DSM 15497 / L2-TR).